The sequence spans 414 residues: MLIIEDLRAFEVLDSRGNPTIKAEIMLSDGSMGSAIVPSGASTGKKEALELRDNDERFGGKGVLKAIENINGTIAENIIGLDAFNQTQLDNTLLELDGTKNYSNLGANATLGISMATARAAANALGIPLYRYLGGANASVLPVPMCNIINGGAHANNNVDFQEFMIMPFGFSSFKEGLRSVCEIYAILKKELAALGYSTALGDEGGFAPNLANNTEPLDLLMTCIKKAGYENKIKLALDVASSELYKDGKYYLEGKVFSNEDLIARYEELCAKYPIFSIEDGLAEDDYEGWIKLTQKLGNKIQLVGDDLFVTNEDILREGILKNMANAVLIKPNQIGTITQTMRTVRLAHRNNYRCIMSHRSGESEDAFIADFAVALNTGQIKTGALARGERTAKYNRLLEIELDNDEYLGDKL.

Glutamine 162 provides a ligand contact to (2R)-2-phosphoglycerate. Glutamate 204 functions as the Proton donor in the catalytic mechanism. Mg(2+) contacts are provided by aspartate 239, glutamate 280, and aspartate 307. Lysine 332, arginine 361, serine 362, and lysine 383 together coordinate (2R)-2-phosphoglycerate. Lysine 332 serves as the catalytic Proton acceptor.

This sequence belongs to the enolase family. Mg(2+) serves as cofactor.

The protein localises to the cytoplasm. It is found in the secreted. Its subcellular location is the cell surface. The catalysed reaction is (2R)-2-phosphoglycerate = phosphoenolpyruvate + H2O. It functions in the pathway carbohydrate degradation; glycolysis; pyruvate from D-glyceraldehyde 3-phosphate: step 4/5. Functionally, catalyzes the reversible conversion of 2-phosphoglycerate (2-PG) into phosphoenolpyruvate (PEP). It is essential for the degradation of carbohydrates via glycolysis. The protein is Enolase of Campylobacter lari (strain RM2100 / D67 / ATCC BAA-1060).